The chain runs to 123 residues: UPF0102 protein CLJ_B2665 (123 aa).

The protein belongs to the UPF0102 family.

This chain is UPF0102 protein CLJ_B2665, found in Clostridium botulinum (strain 657 / Type Ba4).